The chain runs to 852 residues: MEDSIIRIAPYHYIHVLDQNTNVARIENGPKTYIRQDNERVLFPPERMVTIPPRHYCVVANPVVRDREGMPVCDGFGQARLRHGDREVRLSQDPFPLYPGEELGQVATALQVVKTNSALHLQAQLDFEDHGEKRVAGDEWLFEGPGTYIPRTEVVMICWINAIVIRHNQGLRLRARKDTRDRDGRDRVTGEEWMVRRVGAYLPGVYEEVLDVVNAFILTEKRALHLRALQTVKDMRDRVRRTGEEWLVTLAEAEAYVPGVEEEVVGQVEVTTLGTRQYCVVLDPVGADGKPQLGQKLVVKGEKSFFLQPGEHLEAGIQDTYVLSEEEGLVLRAVEAFEEKDEAGKVHCRKPGDRWMIRGPVEYVPPVTVEVLSYRHAIPLDQNEGIYVRDLKSGKVRAVIGESYMLSQDEELWEKTLPPNVEALLTPDKDPVLNRNVHQSEAGHQEEGVKKRDPTRVVTFRVPHNAAVQVYDYSQKSARVVFGPELVMLETDEQLTVLSLSGGRPKRPGVIRSLCLLLGPDFFTDVIVIETADHARLQLQLAYNWHFEVKDRSDPMESAKVFSVLDFVGDACKAIASRIRGAVASVQFDDFHKNSSRILRAAVFGLDPELRVRERLLFPQNSLCVTSVDVHSVEPVDQRTRDALQRSVQLAIEITTKSQEAAARQEAARLEQEAKGRLERQRILDQAESERARRELLLLEADSTAVESRGAARAEAESRAEASRIEGEGSVLQAKLKAQALDIETEAELERLTKARERELKYIAEQNRLEVEKTRQLSELESRRFQEMVQAIGADTIRAIAESGPELQVKLLQGLGLNSTLITDGSTPVNLFSAAKGMLGVPAMSMEHRGSE.

9 MVP repeats span residues 2–54, 55–109, 110–161, 162–214, 215–269, 270–320, 321–377, 378–457, and 458–520; these read EDSI…IPPR, HYCV…VATA, LQVV…CWIN, AIVI…DVVN, AFIL…GQVE, VTTL…IQDT, YVLS…YRHA, IPLD…PTRV, and VTFR…LLGP.

In terms of assembly, the vault ribonucleoprotein particle is a huge (400 A x 670 A) cage structure of 12.9 MDa. It consists of a dimer of half-vaults, with each half-vault comprising 39 identical major vault protein (MVP) chains, PARP4 and one or more vault RNAs (vRNAs). Expression is highest in brain and enriched in the electric lobe. Closely associated with synaptic vesicles in the nerve terminals of the electric organ.

Its subcellular location is the cytoplasm. The protein resides in the nucleus. Functionally, required for normal vault structure. Vaults are multi-subunit structures that may act as scaffolds for proteins involved in signal transduction. Vaults may also play a role in nucleo-cytoplasmic transport. This is Major vault protein (MVP) from Diplobatis ommata (Ocellated electric ray).